Reading from the N-terminus, the 552-residue chain is Non-structural protein NS1 (552 aa).

It belongs to the orbivirus non-structural protein NS1 family.

This Bluetongue virus 1 (isolate Australia) (BTV 1) protein is Non-structural protein NS1 (Segment-5).